The sequence spans 372 residues: MPTMWPLWLLASLLALSQALPFEQKGFWDFTLDDGLPMLNDEEASGADTTSGIPDLDSLTPTFSAMCPFGCHCHLRVVQCSDLGLKAVPKEISPDTTLLDLQNNEISELRKDDFKGLQHLYALVLVNNKISKIHEKAFSPLRKLQKLYISKNHLVEIPPNLPSSLVELRIHDNRIRKVPKGVFSGLRNMNCIEMGGNPLENSGFQPGAFDGLKLNYLRISEAKLTGIPKDLPETLNELHLDHNKIQAIELEDLLRYSKLYRLGLGHNQIRMIENGSLSFLPTLRELHLDNNKLSRVPAGLPDLKLLQVVYLHTNNITKVGVNDFCPVGFGVKRAYYNGISLFNNPVPYWEVQPATFRCVTDRLAIQFGNYKK.

Positions 1-19 (MPTMWPLWLLASLLALSQA) are cleaved as a signal peptide. Residues 20–40 (LPFEQKGFWDFTLDDGLPMLN) constitute a propeptide that is removed on maturation. O-linked (Xyl...) (glycosaminoglycan) serine glycans are attached at residues S45 and S51. 2 disulfide bridges follow: C67-C73 and C71-C80. 12 LRR repeats span residues 86 to 106 (KAVP…NNEI), 107 to 130 (SELR…NNKI), 131 to 154 (SKIH…KNHL), 155 to 175 (VEIP…DNRI), 176 to 199 (RKVP…GNPL), 200 to 224 (ENSG…EAKL), 225 to 245 (TGIP…HNKI), 246 to 269 (QAIE…HNQI), 270 to 293 (RMIE…NNKL), 294 to 316 (SRVP…TNNI), 317 to 346 (TKVG…NNPV), and 347 to 372 (PYWE…NYKK). N274 and N315 each carry an N-linked (GlcNAc...) asparagine glycan. A disulfide bridge links C325 with C358.

The protein belongs to the small leucine-rich proteoglycan (SLRP) family. SLRP class I subfamily. As to quaternary structure, homodimer. Forms a ternary complex with MFAP2 and ELN. Post-translationally, the two attached glycosaminoglycan chains can be either chondroitin sulfate or dermatan sulfate.

Its subcellular location is the secreted. It localises to the extracellular space. It is found in the extracellular matrix. May be involved in collagen fiber assembly. The sequence is that of Biglycan (BGN) from Equus caballus (Horse).